A 252-amino-acid polypeptide reads, in one-letter code: 5-oxoprolinase subunit A (252 aa).

Belongs to the LamB/PxpA family. As to quaternary structure, forms a complex composed of PxpA, PxpB and PxpC.

It carries out the reaction 5-oxo-L-proline + ATP + 2 H2O = L-glutamate + ADP + phosphate + H(+). Functionally, catalyzes the cleavage of 5-oxoproline to form L-glutamate coupled to the hydrolysis of ATP to ADP and inorganic phosphate. The sequence is that of 5-oxoprolinase subunit A from Mycobacterium marinum (strain ATCC BAA-535 / M).